The primary structure comprises 2429 residues: Highly reducing polyketide synthase acrA (2429 aa).

The Ketosynthase family 3 (KS3) domain maps to Pro-4–Ser-436. Catalysis depends on for beta-ketoacyl synthase activity residues Cys-177, His-314, and His-356. Positions Val-541–Gln-861 are malonyl-CoA:ACP transacylase (MAT) domain. The interval His-931–Ala-1068 is N-terminal hotdog fold. Positions His-931–Pro-1229 are dehydratase (DH) domain. A PKS/mFAS DH domain is found at His-931–Arg-1230. His-963 functions as the Proton acceptor; for dehydratase activity in the catalytic mechanism. A C-terminal hotdog fold region spans residues Val-1082–Arg-1230. Residue Asp-1141 is the Proton donor; for dehydratase activity of the active site. The methyltransferase (MT) domain stretch occupies residues Asn-1388–Tyr-1577. Residues Thr-2065–His-2235 form a ketoreductase (KR) domain region. Residues Glu-2351–Val-2428 enclose the Carrier domain. At Ser-2388 the chain carries O-(pantetheine 4'-phosphoryl)serine.

Its pathway is secondary metabolite biosynthesis. In terms of biological role, highly reducing polyketide synthase; part of the cluster that mediates the biosynthesis of acurin A, a highly reduced polyketide coupled to a serine via a peptide bond. The activities of the highly reducing polyketide synthase acrA and the nonribosomal peptide synthetase acrB are collectively responsible for the synthesis of the acurin A core structure with a heptaketide backbone produced by acrA covalently fused to a L-serine by acrB. After the formation of the PK-NRP hybrid product, it is detached from acrB by reductive release to set up the formation of the lactam ring by aldol condensation. The hydrolyase acrC then catalyzes water loss to generate a double bond in the ring. This double bond is probably reduced, which is followed by three oxidations at C-22 to generate the carboxylic acid moiety, involving probably the FAD-binding monooxygenase acrE and the cytochrome P450 monooxygenases acrD and acrF. Finally, a last methylation step performed by the O-methyltransferase acrG leads to the production of acurin A. The sequence is that of Highly reducing polyketide synthase acrA from Aspergillus aculeatus (strain ATCC 16872 / CBS 172.66 / WB 5094).